Reading from the N-terminus, the 370-residue chain is Anthranilate phosphoribosyltransferase (370 aa).

Positions Met1–Trp27 are disordered. Residues Gly107, Gly110–Asp111, Thr115, Asn117–Thr120, Lys135–Ser143, and Gly147 each bind 5-phospho-alpha-D-ribose 1-diphosphate. Residue Gly107 participates in anthranilate binding. Ser119 contacts Mg(2+). Asn138 lines the anthranilate pocket. Arg193 is a binding site for anthranilate. Mg(2+) contacts are provided by Asp251 and Glu252.

This sequence belongs to the anthranilate phosphoribosyltransferase family. Homodimer. Mg(2+) is required as a cofactor.

It catalyses the reaction N-(5-phospho-beta-D-ribosyl)anthranilate + diphosphate = 5-phospho-alpha-D-ribose 1-diphosphate + anthranilate. Its pathway is amino-acid biosynthesis; L-tryptophan biosynthesis; L-tryptophan from chorismate: step 2/5. Functionally, catalyzes the transfer of the phosphoribosyl group of 5-phosphorylribose-1-pyrophosphate (PRPP) to anthranilate to yield N-(5'-phosphoribosyl)-anthranilate (PRA). This Mycobacterium bovis (strain ATCC BAA-935 / AF2122/97) protein is Anthranilate phosphoribosyltransferase.